The chain runs to 159 residues: NAD(P)H-quinone oxidoreductase subunit J, chloroplastic (159 aa).

It belongs to the complex I 30 kDa subunit family. In terms of assembly, NDH is composed of at least 16 different subunits, 5 of which are encoded in the nucleus. Leaves.

The protein localises to the plastid. The protein resides in the chloroplast thylakoid membrane. The catalysed reaction is a plastoquinone + NADH + (n+1) H(+)(in) = a plastoquinol + NAD(+) + n H(+)(out). The enzyme catalyses a plastoquinone + NADPH + (n+1) H(+)(in) = a plastoquinol + NADP(+) + n H(+)(out). NDH shuttles electrons from NAD(P)H:plastoquinone, via FMN and iron-sulfur (Fe-S) centers, to quinones in the photosynthetic chain and possibly in a chloroplast respiratory chain. The immediate electron acceptor for the enzyme in this species is believed to be plastoquinone. Couples the redox reaction to proton translocation, and thus conserves the redox energy in a proton gradient. This is NAD(P)H-quinone oxidoreductase subunit J, chloroplastic from Zea mays (Maize).